A 679-amino-acid chain; its full sequence is UvrABC system protein B (679 aa).

A Helicase ATP-binding domain is found at 31-414; sequence ENLTDGLAHQ…ELEKSGSEII (384 aa). 44–51 is a binding site for ATP; the sequence is GVTGSGKT. The short motif at 97-120 is the Beta-hairpin element; the sequence is YYDYYQPEAYVPSSDTFIEKDASI. The region spanning 436-589 is the Helicase C-terminal domain; the sequence is QVDDLLSEAR…QTKYNEEHGI (154 aa). The UVR domain maps to 639-674; that stretch reads QQQIKKLEQQMYKFAQDLEFEKAAAIRDQLHQLREQ.

This sequence belongs to the UvrB family. As to quaternary structure, forms a heterotetramer with UvrA during the search for lesions. Interacts with UvrC in an incision complex.

Its subcellular location is the cytoplasm. Functionally, the UvrABC repair system catalyzes the recognition and processing of DNA lesions. A damage recognition complex composed of 2 UvrA and 2 UvrB subunits scans DNA for abnormalities. Upon binding of the UvrA(2)B(2) complex to a putative damaged site, the DNA wraps around one UvrB monomer. DNA wrap is dependent on ATP binding by UvrB and probably causes local melting of the DNA helix, facilitating insertion of UvrB beta-hairpin between the DNA strands. Then UvrB probes one DNA strand for the presence of a lesion. If a lesion is found the UvrA subunits dissociate and the UvrB-DNA preincision complex is formed. This complex is subsequently bound by UvrC and the second UvrB is released. If no lesion is found, the DNA wraps around the other UvrB subunit that will check the other stand for damage. This chain is UvrABC system protein B, found in Haemophilus influenzae (strain ATCC 51907 / DSM 11121 / KW20 / Rd).